The chain runs to 432 residues: D-amino acid dehydrogenase (432 aa).

3-17 lines the FAD pocket; the sequence is VVILGSGVVGVASAW.

It belongs to the DadA oxidoreductase family. FAD serves as cofactor.

It carries out the reaction a D-alpha-amino acid + A + H2O = a 2-oxocarboxylate + AH2 + NH4(+). The protein operates within amino-acid degradation; D-alanine degradation; NH(3) and pyruvate from D-alanine: step 1/1. In terms of biological role, oxidative deamination of D-amino acids. The protein is D-amino acid dehydrogenase of Escherichia coli O127:H6 (strain E2348/69 / EPEC).